Here is a 293-residue protein sequence, read N- to C-terminus: Acetylglutamate kinase (293 aa).

Residues 65–66 (GG), Arg-87, and Asn-180 each bind substrate.

The protein belongs to the acetylglutamate kinase family. ArgB subfamily.

It is found in the cytoplasm. It carries out the reaction N-acetyl-L-glutamate + ATP = N-acetyl-L-glutamyl 5-phosphate + ADP. The protein operates within amino-acid biosynthesis; L-arginine biosynthesis; N(2)-acetyl-L-ornithine from L-glutamate: step 2/4. Functionally, catalyzes the ATP-dependent phosphorylation of N-acetyl-L-glutamate. This Cereibacter sphaeroides (strain ATCC 17029 / ATH 2.4.9) (Rhodobacter sphaeroides) protein is Acetylglutamate kinase.